The primary structure comprises 137 residues: Small ribosomal subunit protein uS12 (137 aa).

Positions 1–57 (MPTINQLVRKPRQSKSKKSDSPVLNRGFNSKKKQFTNLNSPQKRGVCTRVGTMTPRK) are disordered. D102 is modified (3-methylthioaspartic acid). Residues 118-137 (SGVDGRRQGRSLYGTKKPKN) are disordered.

It belongs to the universal ribosomal protein uS12 family. In terms of assembly, part of the 30S ribosomal subunit. Contacts proteins S8 and S17. May interact with IF1 in the 30S initiation complex.

In terms of biological role, with S4 and S5 plays an important role in translational accuracy. Its function is as follows. Interacts with and stabilizes bases of the 16S rRNA that are involved in tRNA selection in the A site and with the mRNA backbone. Located at the interface of the 30S and 50S subunits, it traverses the body of the 30S subunit contacting proteins on the other side and probably holding the rRNA structure together. The combined cluster of proteins S8, S12 and S17 appears to hold together the shoulder and platform of the 30S subunit. The chain is Small ribosomal subunit protein uS12 from Staphylococcus haemolyticus (strain JCSC1435).